The primary structure comprises 448 residues: Antizyme inhibitor 1 (448 aa).

Belongs to the Orn/Lys/Arg decarboxylase class-II family. ODC antizyme inhibitor subfamily. Monomer. Interacts with OAZ1 and OAZ3; this interaction disrupts the interaction between the antizyme and ODC1. Post-translationally, ubiquitinated, leading to its proteasomal degradation; a process that is reduced in presence of antizyme OAZ1. Expressed in various tissues including liver, heart and kidney.

It is found in the nucleus. Antizyme inhibitor (AZI) protein that positively regulates ornithine decarboxylase (ODC) activity and polyamine uptake. AZI is an enzymatically inactive ODC homolog that counteracts the negative effect of ODC antizymes (AZs) OAZ1, OAZ2 and OAZ3 on ODC activity by competing with ODC for antizyme-binding. Inhibits antizyme-dependent ODC degradation and releases ODC monomers from their inactive complex with antizymes, leading to formation of the catalytically active ODC homodimer and restoring polyamine production. This chain is Antizyme inhibitor 1 (Azin1), found in Rattus norvegicus (Rat).